A 101-amino-acid polypeptide reads, in one-letter code: NAD(P)H-quinone oxidoreductase subunit 4L, chloroplastic (101 aa).

3 consecutive transmembrane segments (helical) span residues 2–22 (MFEHVLFLSAYLFSIGIYGLI), 32–52 (MCLELILNSVNINLVTFSDLF), and 61–81 (IFSIFVIAIAAAEAAIGLAIV).

The protein belongs to the complex I subunit 4L family. NDH is composed of at least 16 different subunits, 5 of which are encoded in the nucleus.

Its subcellular location is the plastid. It is found in the chloroplast thylakoid membrane. It catalyses the reaction a plastoquinone + NADH + (n+1) H(+)(in) = a plastoquinol + NAD(+) + n H(+)(out). The enzyme catalyses a plastoquinone + NADPH + (n+1) H(+)(in) = a plastoquinol + NADP(+) + n H(+)(out). NDH shuttles electrons from NAD(P)H:plastoquinone, via FMN and iron-sulfur (Fe-S) centers, to quinones in the photosynthetic chain and possibly in a chloroplast respiratory chain. The immediate electron acceptor for the enzyme in this species is believed to be plastoquinone. Couples the redox reaction to proton translocation, and thus conserves the redox energy in a proton gradient. In Lemna minor (Common duckweed), this protein is NAD(P)H-quinone oxidoreductase subunit 4L, chloroplastic.